We begin with the raw amino-acid sequence, 334 residues long: Protein-methionine-sulfoxide reductase catalytic subunit MsrP (334 aa).

A signal peptide (tat-type signal) is located at residues 1–44 (MKKNQFLKESDVTAESVFFMKRRQVLKALGISATALSLPHAAHA). Mo-molybdopterin is bound by residues asparagine 88, 91–92 (YE), cysteine 146, threonine 181, asparagine 233, arginine 238, and 249–251 (GIK).

Belongs to the MsrP family. As to quaternary structure, heterodimer of a catalytic subunit (MsrP) and a heme-binding subunit (MsrQ). Mo-molybdopterin serves as cofactor. In terms of processing, predicted to be exported by the Tat system. The position of the signal peptide cleavage has not been experimentally proven.

Its subcellular location is the periplasm. The catalysed reaction is L-methionyl-[protein] + a quinone + H2O = L-methionyl-(S)-S-oxide-[protein] + a quinol. It carries out the reaction L-methionyl-[protein] + a quinone + H2O = L-methionyl-(R)-S-oxide-[protein] + a quinol. Its function is as follows. Part of the MsrPQ system that repairs oxidized periplasmic proteins containing methionine sulfoxide residues (Met-O), using respiratory chain electrons. Thus protects these proteins from oxidative-stress damage caused by reactive species of oxygen and chlorine generated by the host defense mechanisms. MsrPQ is essential for the maintenance of envelope integrity under bleach stress, rescuing a wide series of structurally unrelated periplasmic proteins from methionine oxidation, including the primary periplasmic chaperone SurA and the lipoprotein Pal. The catalytic subunit MsrP is non-stereospecific, being able to reduce both (R-) and (S-) diastereoisomers of methionine sulfoxide. This is Protein-methionine-sulfoxide reductase catalytic subunit MsrP from Escherichia coli (strain K12 / MC4100 / BW2952).